We begin with the raw amino-acid sequence, 141 residues long: uncharacterized protein (141 aa).

Transmembrane regions (helical) follow at residues 7–27, 47–67, 75–95, and 106–126; these read VAIMTTISAFLFCAVIVAASL, SAVGMILVLYFIPFLVYMLGV, AVLCGFGLLIHLSSAGFILMF, and VIFVLGVSLAAAAVNVIWFVA.

The protein resides in the cell membrane. This is an uncharacterized protein from Bacillus subtilis (strain 168).